The sequence spans 205 residues: tRNA (pseudouridine(54)-N(1))-methyltransferase (205 aa).

Residues leucine 136, glycine 156, leucine 179–leucine 184, and cysteine 189 contribute to the S-adenosyl-L-methionine site.

This sequence belongs to the methyltransferase superfamily. TrmY family. Homodimer.

It localises to the cytoplasm. It catalyses the reaction pseudouridine(54) in tRNA + S-adenosyl-L-methionine = N(1)-methylpseudouridine(54) in tRNA + S-adenosyl-L-homocysteine + H(+). Functionally, specifically catalyzes the N1-methylation of pseudouridine at position 54 (Psi54) in tRNAs. The sequence is that of tRNA (pseudouridine(54)-N(1))-methyltransferase from Methanocaldococcus jannaschii (strain ATCC 43067 / DSM 2661 / JAL-1 / JCM 10045 / NBRC 100440) (Methanococcus jannaschii).